The chain runs to 304 residues: Oxygen-dependent coproporphyrinogen-III oxidase (304 aa).

Ser93 is a binding site for substrate. A divalent metal cation contacts are provided by His97 and His107. The active-site Proton donor is His107. Residue 109 to 111 (NVR) participates in substrate binding. The a divalent metal cation site is built by His146 and His176. Residues 241 to 276 (YVEFNLVYDRGTLFGLQSGGRTESILMSLPPQVRWA) are important for dimerization. 259–261 (GGR) lines the substrate pocket.

The protein belongs to the aerobic coproporphyrinogen-III oxidase family. Homodimer. A divalent metal cation is required as a cofactor.

The protein resides in the cytoplasm. It catalyses the reaction coproporphyrinogen III + O2 + 2 H(+) = protoporphyrinogen IX + 2 CO2 + 2 H2O. It participates in porphyrin-containing compound metabolism; protoporphyrin-IX biosynthesis; protoporphyrinogen-IX from coproporphyrinogen-III (O2 route): step 1/1. Involved in the heme biosynthesis. Catalyzes the aerobic oxidative decarboxylation of propionate groups of rings A and B of coproporphyrinogen-III to yield the vinyl groups in protoporphyrinogen-IX. This is Oxygen-dependent coproporphyrinogen-III oxidase from Pseudomonas fluorescens (strain Pf0-1).